Reading from the N-terminus, the 85-residue chain is uncharacterized protein (85 aa).

2 helical membrane-spanning segments follow: residues 14-34 (FLFG…RATI) and 60-80 (IFVY…IYFL).

It localises to the cell membrane. This is an uncharacterized protein from Escherichia coli O157:H7.